Reading from the N-terminus, the 1227-residue chain is Tyrosine-protein kinase receptor ver-3 (1227 aa).

The signal sequence occupies residues 1 to 17; sequence MKLKLTVLLILVHASAS. The Extracellular segment spans residues 18–764; it reads YKPPAIEVED…VQVNNAPKGS (747 aa). Residues 20–110 form the Ig-like C2-type 1 domain; sequence PPAIEVEDYQ…RESDTGTYSC (91 aa). Cysteine 52 and cysteine 110 are joined by a disulfide. Residues asparagine 119, asparagine 211, asparagine 245, asparagine 255, asparagine 381, asparagine 425, and asparagine 528 are each glycosylated (N-linked (GlcNAc...) asparagine). Residues 200 to 325 form the Ig-like C2-type 2 domain; that stretch reads VNFECRYKKE…EHENKETKYT (126 aa). Cysteine 204 and cysteine 313 are disulfide-bonded. Ig-like C2-type domains follow at residues 565 to 666 and 673 to 758; these read PHHE…TSID and PSIT…VQVN. 2 disulfide bridges follow: cysteine 592-cysteine 650 and cysteine 696-cysteine 740. N-linked (GlcNAc...) asparagine glycosylation is present at asparagine 697. A helical transmembrane segment spans residues 765–785; that stretch reads LFFYWFLALLLLISIIAVFLL. Residues 786–1227 lie on the Cytoplasmic side of the membrane; that stretch reads TCKLRASNRL…ERYLIVESHA (442 aa). A Protein kinase domain is found at 847-1175; it reads LEILNPIGSG…HMRDSSSQFL (329 aa). ATP-binding positions include 853 to 861 and lysine 886; that span reads IGSGHFGVV. Aspartate 1030 (proton acceptor) is an active-site residue. The disordered stretch occupies residues 1194–1227; the sequence is DWIQDSRPDVPNVSFQKSPKKQKEERYLIVESHA. Residues 1214-1227 are compositionally biased toward basic and acidic residues; that stretch reads KQKEERYLIVESHA.

This sequence belongs to the protein kinase superfamily. Tyr protein kinase family. As to expression, expressed in the ALA neuron.

Its subcellular location is the cell membrane. It catalyses the reaction L-tyrosyl-[protein] + ATP = O-phospho-L-tyrosyl-[protein] + ADP + H(+). Functionally, receptor tyrosine kinase which may be involved, downstream of pvf-1, in the positioning of ray 1, the most anterior ray sensillum in the male tail. This chain is Tyrosine-protein kinase receptor ver-3, found in Caenorhabditis elegans.